A 72-amino-acid chain; its full sequence is Guanine nucleotide-binding protein subunit gamma (72 aa).

The interval 32–72 is disordered; that stretch reads MVSVAPPKANPSVSSKTKQQQHFKPGKATKDKATTKCCTIS. The S-palmitoyl cysteine moiety is linked to residue cysteine 68. Cysteine 69 carries the post-translational modification Cysteine methyl ester. A lipid anchor (S-farnesyl cysteine) is attached at cysteine 69. Positions 70-72 are cleaved as a propeptide — removed in mature form; that stretch reads TIS.

Belongs to the G protein gamma family. G proteins are composed of 3 units, alpha, beta and gamma. Binding of the beta-gamma subunit complex (git5-git11) to the alpha subunit (gpa2) facilitates interaction with GPCR git3.

The protein resides in the cell membrane. In terms of biological role, gamma subunit of the heterotrimeric guanine nucleotide-binding protein (G protein) involved in glucose-induced cAMP signaling. The beta-gamma subunits (git5-git11) promote binding of the alpha subunit gpa2 to GPCR git3, which senses extracellular glucose, to activate cAMP-PKA signaling and repress sexual development and gluconeogenesis. The protein is Guanine nucleotide-binding protein subunit gamma (git11) of Schizosaccharomyces pombe (strain 972 / ATCC 24843) (Fission yeast).